A 90-amino-acid polypeptide reads, in one-letter code: Protein RALF-like 29 (90 aa).

Positions 1 to 25 (MIKTKEVTFVTILIVLCVFISTIHA) are cleaved as a signal peptide. Disulfide bonds link Cys41–Cys50 and Cys63–Cys69.

This sequence belongs to the plant rapid alkalinization factor (RALF) family.

Its subcellular location is the secreted. In terms of biological role, cell signaling peptide that may regulate plant stress, growth, and development. Mediates a rapid alkalinization of extracellular space by mediating a transient increase in the cytoplasmic Ca(2+) concentration leading to a calcium-dependent signaling events through a cell surface receptor and a concomitant activation of some intracellular mitogen-activated protein kinases. This chain is Protein RALF-like 29 (RALFL29), found in Arabidopsis thaliana (Mouse-ear cress).